The following is a 719-amino-acid chain: Pesticidal crystal protein Cry1Ia (719 aa).

This sequence belongs to the delta endotoxin family.

Its function is as follows. Promotes colloidosmotic lysis by binding to the midgut epithelial cells of certain coleopteran and lepidopteran species. Active on Plutella xylostella and Bombyx mori. The protein is Pesticidal crystal protein Cry1Ia (cry1Ia) of Bacillus thuringiensis subsp. kurstaki.